Reading from the N-terminus, the 502-residue chain is ATP synthase subunit alpha (502 aa).

Residue 169-176 (GDRQTGKT) participates in ATP binding.

Belongs to the ATPase alpha/beta chains family. As to quaternary structure, F-type ATPases have 2 components, CF(1) - the catalytic core - and CF(0) - the membrane proton channel. CF(1) has five subunits: alpha(3), beta(3), gamma(1), delta(1), epsilon(1). CF(0) has three main subunits: a(1), b(2) and c(9-12). The alpha and beta chains form an alternating ring which encloses part of the gamma chain. CF(1) is attached to CF(0) by a central stalk formed by the gamma and epsilon chains, while a peripheral stalk is formed by the delta and b chains.

It is found in the cell inner membrane. It carries out the reaction ATP + H2O + 4 H(+)(in) = ADP + phosphate + 5 H(+)(out). Produces ATP from ADP in the presence of a proton gradient across the membrane. The alpha chain is a regulatory subunit. The protein is ATP synthase subunit alpha of Citrifermentans bemidjiense (strain ATCC BAA-1014 / DSM 16622 / JCM 12645 / Bem) (Geobacter bemidjiensis).